We begin with the raw amino-acid sequence, 101 residues long: Unclassified hydrophobin dewD (101 aa).

Positions 1–21 (MHLSTSAAAILALSLAGPTMA) are cleaved as a signal peptide. Disulfide bonds link Cys-27–Cys-81, Cys-41–Cys-73, Cys-42–Cys-60, and Cys-82–Cys-91.

As to quaternary structure, self-assembles to form functional amyloid fibrils called rodlets. Self-assembly into fibrillar rodlets occurs spontaneously at hydrophobic:hydrophilic interfaces and the rodlets further associate laterally to form amphipathic monolayers.

The protein resides in the secreted. It localises to the spore wall. In terms of biological role, aerial growth, conidiation, and dispersal of filamentous fungi in the environment rely upon a capability of their secreting small amphipathic proteins called hydrophobins (HPBs) with low sequence identity. Class I can self-assemble into an outermost layer of rodlet bundles on aerial cell surfaces, conferring cellular hydrophobicity that supports fungal growth, development and dispersal; whereas Class II form highly ordered films at water-air interfaces through intermolecular interactions but contribute nothing to the rodlet structure. DewD is an unclassified hydrophobin that contributes to the hydrophobicity of the spore surface. The sequence is that of Unclassified hydrophobin dewD from Emericella nidulans (strain FGSC A4 / ATCC 38163 / CBS 112.46 / NRRL 194 / M139) (Aspergillus nidulans).